Consider the following 343-residue polypeptide: Nuclease EXOG, mitochondrial (343 aa).

His-121 serves as the catalytic Proton acceptor. Asn-152 contacts a divalent metal cation.

This sequence belongs to the DNA/RNA non-specific endonuclease family. Homodimer. It depends on a divalent metal cation as a cofactor.

It is found in the mitochondrion inner membrane. Functionally, endo/exonuclease with nicking activity towards supercoiled DNA, a preference for single-stranded DNA and 5'-3' exonuclease activity. The chain is Nuclease EXOG, mitochondrial (exog) from Danio rerio (Zebrafish).